Consider the following 546-residue polypeptide: Metal transporter Nramp6.2 (546 aa).

Helical transmembrane passes span 50–70 (FLPY…PGNL), 83–103 (ELLW…SLAA), 128–150 (SLWL…GTAF), 154–176 (ILFH…LLLG), 187–207 (LLIS…LSYV), 233–253 (IALL…ALVL), 270–290 (YFLI…VSII), and 333–353 (IYAI…TYAG). A glycan (N-linked (GlcNAc...) asparagine) is linked at Asn371. Helical transmembrane passes span 374–394 (TRCI…SSGA), 397–417 (LIII…IPLL), 433–453 (IYII…NVYY), and 473–493 (VIIG…IIYL).

The protein belongs to the NRAMP (TC 2.A.55) family.

The protein resides in the membrane. Functionally, probable divalent metal transporter. This Populus trichocarpa (Western balsam poplar) protein is Metal transporter Nramp6.2.